We begin with the raw amino-acid sequence, 384 residues long: Succinate--CoA ligase [ADP-forming] subunit beta (384 aa).

Residues 9-242 (KAILAQYKVP…LNEEDPLEVE (234 aa)) enclose the ATP-grasp domain. ATP contacts are provided by residues lysine 45, 52 to 54 (GRG), glutamate 98, leucine 101, and glutamate 106. The Mg(2+) site is built by asparagine 197 and aspartate 211. Substrate-binding positions include asparagine 262 and 319–321 (GIL).

This sequence belongs to the succinate/malate CoA ligase beta subunit family. In terms of assembly, heterotetramer of two alpha and two beta subunits. Mg(2+) serves as cofactor.

The catalysed reaction is succinate + ATP + CoA = succinyl-CoA + ADP + phosphate. The enzyme catalyses GTP + succinate + CoA = succinyl-CoA + GDP + phosphate. It functions in the pathway carbohydrate metabolism; tricarboxylic acid cycle; succinate from succinyl-CoA (ligase route): step 1/1. Succinyl-CoA synthetase functions in the citric acid cycle (TCA), coupling the hydrolysis of succinyl-CoA to the synthesis of either ATP or GTP and thus represents the only step of substrate-level phosphorylation in the TCA. The beta subunit provides nucleotide specificity of the enzyme and binds the substrate succinate, while the binding sites for coenzyme A and phosphate are found in the alpha subunit. This Solibacter usitatus (strain Ellin6076) protein is Succinate--CoA ligase [ADP-forming] subunit beta.